We begin with the raw amino-acid sequence, 487 residues long: Glutamate mutase epsilon subunit (487 aa).

Arg-62 is an L-glutamate binding site. Gly-64 is a binding site for adenosylcob(III)alamin. Arg-96 provides a ligand contact to L-glutamate. Position 119 (Asn-119) interacts with adenosylcob(III)alamin. L-glutamate contacts are provided by residues 145–146 (RH), Glu-167, and Tyr-173. Pro-176 is a binding site for adenosylcob(III)alamin. Residue Tyr-177 participates in L-glutamate binding. The adenosylcob(III)alamin site is built by Phe-289, Lys-318, and Glu-322. The tract at residues 465–487 (SDGKLIGRPGGDNSPAGGASDAD) is disordered.

It belongs to the methylaspartate mutase GlmE subunit family. In terms of assembly, heterotetramer composed of 2 epsilon subunits (GlmE) and 2 sigma subunits (GlmS). GlmE exists as a homodimer and GlmS as a monomer. The cofactor is adenosylcob(III)alamin.

The catalysed reaction is (2S,3S)-3-methyl-L-aspartate = L-glutamate. It functions in the pathway amino-acid degradation; L-glutamate degradation via mesaconate pathway; acetate and pyruvate from L-glutamate: step 1/4. Catalyzes the carbon skeleton rearrangement of L-glutamate to L-threo-3-methylaspartate ((2S,3S)-3-methylaspartate). The protein is Glutamate mutase epsilon subunit of Haloarcula marismortui (strain ATCC 43049 / DSM 3752 / JCM 8966 / VKM B-1809) (Halobacterium marismortui).